A 417-amino-acid chain; its full sequence is D-inositol 3-phosphate glycosyltransferase (417 aa).

H15 provides a ligand contact to 1D-myo-inositol 3-phosphate. UDP-N-acetyl-alpha-D-glucosamine-binding positions include 21–22 (QP) and G29. Residues 26 to 31 (DAGGMN), K84, Y117, T141, and R161 contribute to the 1D-myo-inositol 3-phosphate site. UDP-N-acetyl-alpha-D-glucosamine-binding residues include R241, K246, and V299. 3 residues coordinate Mg(2+): Y308, R309, and A311. E321 and E329 together coordinate UDP-N-acetyl-alpha-D-glucosamine. T335 serves as a coordination point for Mg(2+).

Belongs to the glycosyltransferase group 1 family. MshA subfamily. As to quaternary structure, homodimer.

The catalysed reaction is 1D-myo-inositol 3-phosphate + UDP-N-acetyl-alpha-D-glucosamine = 1D-myo-inositol 2-acetamido-2-deoxy-alpha-D-glucopyranoside 3-phosphate + UDP + H(+). Its function is as follows. Catalyzes the transfer of a N-acetyl-glucosamine moiety to 1D-myo-inositol 3-phosphate to produce 1D-myo-inositol 2-acetamido-2-deoxy-glucopyranoside 3-phosphate in the mycothiol biosynthesis pathway. The sequence is that of D-inositol 3-phosphate glycosyltransferase from Xylanimonas cellulosilytica (strain DSM 15894 / JCM 12276 / CECT 5975 / KCTC 9989 / LMG 20990 / NBRC 107835 / XIL07).